A 184-amino-acid polypeptide reads, in one-letter code: Photosystem I assembly protein Ycf4 (184 aa).

The next 2 helical transmembrane spans lie at 21–43 (NFCW…TSSY) and 58–80 (IFFP…SSYL).

It belongs to the Ycf4 family.

The protein localises to the plastid. It is found in the chloroplast thylakoid membrane. Seems to be required for the assembly of the photosystem I complex. This is Photosystem I assembly protein Ycf4 from Calycanthus floridus var. glaucus (Eastern sweetshrub).